A 179-amino-acid polypeptide reads, in one-letter code: Inosine/xanthosine triphosphatase (179 aa).

Substrate contacts are provided by residues 8–13 and 68–69; these read TTNPAK and EA. Residue Glu-68 coordinates Mg(2+).

Belongs to the YjjX NTPase family. Homodimer. It depends on Mg(2+) as a cofactor. Requires Mn(2+) as cofactor.

The catalysed reaction is XTP + H2O = XDP + phosphate + H(+). It carries out the reaction ITP + H2O = IDP + phosphate + H(+). In terms of biological role, phosphatase that hydrolyzes non-canonical purine nucleotides such as XTP and ITP to their respective diphosphate derivatives. Probably excludes non-canonical purines from DNA/RNA precursor pool, thus preventing their incorporation into DNA/RNA and avoiding chromosomal lesions. The chain is Inosine/xanthosine triphosphatase from Serratia proteamaculans (strain 568).